Consider the following 607-residue polypeptide: MYPPRRIEIPCKPGVYRFEDENGRILYVGKAKNLRNRLGSYFTNARRGRRISYMLSISKKVGWTCVADDIEALRLEYSWIKEFAPPCNVKLKDDKAYPFLAVTIGEQVPRLLITRRKIQYATHFGPYPKVFHLRETVSLLHKIFQIRTCSPTNYKRAIASGMPCFEGQINKCFGPCSLKTTHLQYQKRIKNLMAFLEGQSSSLLESLKKKMLKASKNKEYEEAAILRDKIQAAQTVLSRSAVLLDETVSADFIAVVSDNSIASVQCFRVIAGRIKSVYSWHFEQQEDQSASELLSQSIIQVYDKLSLPKRIVLFDKPSYLSALSAHLNDKNIDRSLEIEIVYHPNEQERRLLETVKDNALSELERHRLRRSSDYTERHRSLFELQKYLNLNSLPVRIECFDISHLLGTNTSGSMVVFENGEPKKSAYRHFNIHIDQNNDTASMFSLICRRLRSLESVAQDSPDYPHLMIIDGGKPQLSAAVGALQEVGLKIPVFALSKRLEELWSPGVKTSLILPPNSESLFLLQKIRDESHRFALKQQTRRREAYLTSELFRIPGLGKQKVMQLLRRFSSFAEIRQASIEDISALPGFGVKTAEKIKECAEAFSLK.

Residues 11 to 89 (CKPGVYRFED…IKEFAPPCNV (79 aa)) enclose the GIY-YIG domain. The region spanning 201–236 (SSLLESLKKKMLKASKNKEYEEAAILRDKIQAAQTV) is the UVR domain.

It belongs to the UvrC family. As to quaternary structure, interacts with UvrB in an incision complex.

It localises to the cytoplasm. Functionally, the UvrABC repair system catalyzes the recognition and processing of DNA lesions. UvrC both incises the 5' and 3' sides of the lesion. The N-terminal half is responsible for the 3' incision and the C-terminal half is responsible for the 5' incision. This Tropheryma whipplei (strain Twist) (Whipple's bacillus) protein is UvrABC system protein C.